The primary structure comprises 484 residues: MEVVIIRVGELTVKRGLTRAEMERLLLRAAREAAEECGGARFEKEPGRIYAYGDVNCLKKALSKVFGVKSVSPARVITYQKITDIALEAADLWSGIVAGKRFAVRVHRVGEHAFTSREVAAEVGAVLVAAGGRVDLEDPELEFYIEIRGNRAYFYTEVIEGPGGLPLGSEGKVLALVSAGIDSPVAAWMLMRRGAHVDVLYCNLGGTITLRHALEVIKRLLAWSYGYNARVIIADCGPVARAMRRGVREELWNIAFKRALYRIGVEIAKRLGAIALATGESLGQVSSQTLQALAAVEAGIDMPILRPLIGMDKDEIVKHAQKIGTYELSAKLPEYCAVFSRRPRKWALREEVEAIDLALYDAITEVVNNAKIVRKRELDEFIKALTPPHDIEIDSAPEGAVIVDLRDEESYKKWHLPGAVRAGVDDVLALVDKLGRDKTYVFYCYSGGLSLDVAESLRKLGIKAYSLRRTRNAVPPSSQGERGN.

One can recognise a THUMP domain in the interval 56-158 (NCLKKALSKV…GNRAYFYTEV (103 aa)). Residues 176-177 (LV), Lys257, Gly279, and Gln288 each bind ATP. Cysteines 336 and 444 form a disulfide. A Rhodanese domain is found at 396–479 (APEGAVIVDL…TRNAVPPSSQ (84 aa)). Cys444 serves as the catalytic Cysteine persulfide intermediate.

It belongs to the ThiI family.

It is found in the cytoplasm. The enzyme catalyses [ThiI sulfur-carrier protein]-S-sulfanyl-L-cysteine + a uridine in tRNA + 2 reduced [2Fe-2S]-[ferredoxin] + ATP + H(+) = [ThiI sulfur-carrier protein]-L-cysteine + a 4-thiouridine in tRNA + 2 oxidized [2Fe-2S]-[ferredoxin] + AMP + diphosphate. It carries out the reaction [ThiS sulfur-carrier protein]-C-terminal Gly-Gly-AMP + S-sulfanyl-L-cysteinyl-[cysteine desulfurase] + AH2 = [ThiS sulfur-carrier protein]-C-terminal-Gly-aminoethanethioate + L-cysteinyl-[cysteine desulfurase] + A + AMP + 2 H(+). It functions in the pathway cofactor biosynthesis; thiamine diphosphate biosynthesis. Functionally, catalyzes the ATP-dependent transfer of a sulfur to tRNA to produce 4-thiouridine in position 8 of tRNAs, which functions as a near-UV photosensor. Also catalyzes the transfer of sulfur to the sulfur carrier protein ThiS, forming ThiS-thiocarboxylate. This is a step in the synthesis of thiazole, in the thiamine biosynthesis pathway. The sulfur is donated as persulfide by IscS. The polypeptide is tRNA sulfurtransferase (Pyrobaculum aerophilum (strain ATCC 51768 / DSM 7523 / JCM 9630 / CIP 104966 / NBRC 100827 / IM2)).